We begin with the raw amino-acid sequence, 86 residues long: MKNLIAELLLKLAQKEEESKELCAQVEALEIIVTAMLRNMAQNDQQRLIEQVDGALYEVKPDASIPDDDTELLRNYVKKLLKHPRQ.

A coiled-coil region spans residues 1–36 (MKNLIAELLLKLAQKEEESKELCAQVEALEIIVTAM).

This sequence belongs to the IraP family. In terms of assembly, interacts with RssB.

The protein resides in the cytoplasm. Functionally, inhibits RpoS proteolysis by regulating RssB activity, thereby increasing the stability of the sigma stress factor RpoS especially during phosphate starvation, but also in stationary phase and during nitrogen starvation. Its effect on RpoS stability is due to its interaction with RssB, which probably blocks the interaction of RssB with RpoS, and the consequent delivery of the RssB-RpoS complex to the ClpXP protein degradation pathway. The protein is Anti-adapter protein IraP of Shigella boydii serotype 18 (strain CDC 3083-94 / BS512).